Consider the following 166-residue polypeptide: Peptidyl-prolyl cis-trans isomerase-like 1 (166 aa).

The 155-residue stretch at 10–164 folds into the PPIase cyclophilin-type domain; sequence QPPNVYLETS…DDVKIIKAYP (155 aa). Residues 54-65, 70-71, 99-104, 109-113, threonine 119, and lysine 125 contribute to the cyclosporin A site; these read HRIIKDFMIQGG, TG, AMANAG, and GSQFF. Phosphoserine is present on serine 149.

It belongs to the cyclophilin-type PPIase family. PPIL1 subfamily. Identified in the spliceosome C complex. Interacts with SNW1/SKIP. Interacts with CDC40/PRP17; this interaction leads to CDC40 isomerization. Interacts with RBM22.

It localises to the nucleus. It carries out the reaction [protein]-peptidylproline (omega=180) = [protein]-peptidylproline (omega=0). With respect to regulation, inhibited by Cyclosporin A. Involved in pre-mRNA splicing as component of the spliceosome. PPIases accelerate the folding of proteins. It catalyzes the cis-trans isomerization of proline imidic peptide bonds in oligopeptides. Catalyzes prolyl peptide bond isomerization in CDC40/PRP17. Plays an important role in embryonic brain development; this function is independent of its isomerase activity. This chain is Peptidyl-prolyl cis-trans isomerase-like 1 (PPIL1), found in Bos taurus (Bovine).